The chain runs to 65 residues: ECSKQLGESCKCNKQCCGATVICGTIYVGGKEENLCIEKTSNNAILNFFGKIAHVVENGLSFSCD.

Contains 4 disulfide bonds. In terms of tissue distribution, expressed by the venom gland.

Its subcellular location is the secreted. In terms of biological role, intrathorax injection into crickets causes paralysis prolonged for more than 60 minutes, followed by recovery. This Macrothele gigas (Japanese funnel web spider) protein is U15-hexatoxin-Mg1a.